The following is an 820-amino-acid chain: Chitinase A (820 aa).

A signal peptide spans 1–21; the sequence is MKLNKITSYIGFALLSGGALA. Residues 158 to 588 form the GH18 domain; sequence RVTGAYFVEW…NAMYDGLTAG (431 aa). The Proton donor role is filled by Glu313.

The protein belongs to the glycosyl hydrolase 18 family. Chitinase class II subfamily.

It catalyses the reaction Random endo-hydrolysis of N-acetyl-beta-D-glucosaminide (1-&gt;4)-beta-linkages in chitin and chitodextrins.. Stimulated by magnesium ions; inhibited by N-bromosuccinimide and 2-hydroxy-5-nitrobenzyl bromide. This Pseudoalteromonas piscicida protein is Chitinase A (chiA).